Consider the following 25-residue polypeptide: MENVMSWFNIDFEIKSDNNIDKTLL.

The sequence is that of SPbeta prophage-derived uncharacterized protein YotF (yotF) from Bacillus subtilis (strain 168).